A 188-amino-acid chain; its full sequence is Peroxynitrite isomerase (188 aa).

Positions 35-41 (GTWRGEG) match the GXWXGXG motif. Heme b is bound at residue His-178.

It belongs to the nitrobindin family. In terms of assembly, homodimer. The cofactor is heme b.

It catalyses the reaction peroxynitrite = nitrate. It participates in nitrogen metabolism. In terms of biological role, heme-binding protein able to scavenge peroxynitrite and to protect free L-tyrosine against peroxynitrite-mediated nitration, by acting as a peroxynitrite isomerase that converts peroxynitrite to nitrate. Therefore, this protein likely plays a role in peroxynitrite sensing and in the detoxification of reactive nitrogen and oxygen species (RNS and ROS, respectively). Is able to bind nitric oxide (NO) in vitro, but may act as a sensor of peroxynitrite levels in vivo. In Frankia casuarinae (strain DSM 45818 / CECT 9043 / HFP020203 / CcI3), this protein is Peroxynitrite isomerase.